The chain runs to 427 residues: Tryptophan synthase beta chain (427 aa).

Lys-100 is modified (N6-(pyridoxal phosphate)lysine).

It belongs to the TrpB family. In terms of assembly, tetramer of two alpha and two beta chains. The cofactor is pyridoxal 5'-phosphate.

It carries out the reaction (1S,2R)-1-C-(indol-3-yl)glycerol 3-phosphate + L-serine = D-glyceraldehyde 3-phosphate + L-tryptophan + H2O. Its pathway is amino-acid biosynthesis; L-tryptophan biosynthesis; L-tryptophan from chorismate: step 5/5. Functionally, the beta subunit is responsible for the synthesis of L-tryptophan from indole and L-serine. In Streptomyces coelicolor (strain ATCC BAA-471 / A3(2) / M145), this protein is Tryptophan synthase beta chain (trpB).